Here is a 603-residue protein sequence, read N- to C-terminus: UvrABC system protein C (603 aa).

Residues 13–92 enclose the GIY-YIG domain; it reads NGPGVYLMKD…IRKHKPRYNI (80 aa). Positions 202–237 constitute a UVR domain; sequence NDLLQKIKEQMAAASERQEYELAARLRDRMFAIQAT.

It belongs to the UvrC family. Interacts with UvrB in an incision complex.

The protein resides in the cytoplasm. Functionally, the UvrABC repair system catalyzes the recognition and processing of DNA lesions. UvrC both incises the 5' and 3' sides of the lesion. The N-terminal half is responsible for the 3' incision and the C-terminal half is responsible for the 5' incision. The chain is UvrABC system protein C from Desulfatibacillum aliphaticivorans.